Consider the following 138-residue polypeptide: Superoxide dismutase [Mn] (138 aa).

The Mn(2+) site is built by histidine 2, histidine 49, aspartate 133, and histidine 137.

It belongs to the iron/manganese superoxide dismutase family. The cofactor is Mn(2+).

It carries out the reaction 2 superoxide + 2 H(+) = H2O2 + O2. Its function is as follows. Destroys superoxide anion radicals which are normally produced within the cells and which are toxic to biological systems. This chain is Superoxide dismutase [Mn] (sodA), found in Mycobacterium szulgai.